Consider the following 231-residue polypeptide: MAELTKKQKDILVKVESNKCYSINDALNLLKECATAKFDESIDMSINLGIDAKKSDQNVRGAIVLPNGTGKTVCVAVFTQGDNIAKAQDAGADVVGMEDLMKSMQDGDLNYDVVIASPDAMGVVGRLGQVLGPRGLMPNPKVGTVTSDVATAVNNAKTGQVRYRADKAGIVHACVGRVSFNVSALTQNINVLMEALKKIKPSSAKGVYFKKLSISSTMGPGLSVDLASLDI.

This sequence belongs to the universal ribosomal protein uL1 family. Part of the 50S ribosomal subunit.

Binds directly to 23S rRNA. The L1 stalk is quite mobile in the ribosome, and is involved in E site tRNA release. In terms of biological role, protein L1 is also a translational repressor protein, it controls the translation of the L11 operon by binding to its mRNA. This chain is Large ribosomal subunit protein uL1, found in Ruthia magnifica subsp. Calyptogena magnifica.